The primary structure comprises 396 residues: Chorismate synthase (396 aa).

Residues Arg-40 and Arg-46 each contribute to the NADP(+) site. FMN contacts are provided by residues 134-136, 257-258, Gly-302, 317-321, and Arg-343; these read RSS, QA, and KPIPS.

The protein belongs to the chorismate synthase family. Homotetramer. Requires FMNH2 as cofactor.

It carries out the reaction 5-O-(1-carboxyvinyl)-3-phosphoshikimate = chorismate + phosphate. Its pathway is metabolic intermediate biosynthesis; chorismate biosynthesis; chorismate from D-erythrose 4-phosphate and phosphoenolpyruvate: step 7/7. Functionally, catalyzes the anti-1,4-elimination of the C-3 phosphate and the C-6 proR hydrogen from 5-enolpyruvylshikimate-3-phosphate (EPSP) to yield chorismate, which is the branch point compound that serves as the starting substrate for the three terminal pathways of aromatic amino acid biosynthesis. This reaction introduces a second double bond into the aromatic ring system. This chain is Chorismate synthase, found in Bifidobacterium animalis subsp. lactis (strain AD011).